We begin with the raw amino-acid sequence, 906 residues long: DNA mismatch repair protein MutS (906 aa).

656-663 lines the ATP pocket; it reads GPNMAGKS.

Belongs to the DNA mismatch repair MutS family.

This protein is involved in the repair of mismatches in DNA. It is possible that it carries out the mismatch recognition step. This protein has a weak ATPase activity. The protein is DNA mismatch repair protein MutS of Rhodopseudomonas palustris (strain BisA53).